We begin with the raw amino-acid sequence, 1464 residues long: DNA polymerase III PolC-type (1464 aa).

In terms of domain architecture, Exonuclease spans 426–582; it reads YVVFDVETTG…YDAEATGRLL (157 aa).

Belongs to the DNA polymerase type-C family. PolC subfamily.

The protein localises to the cytoplasm. It catalyses the reaction DNA(n) + a 2'-deoxyribonucleoside 5'-triphosphate = DNA(n+1) + diphosphate. Its function is as follows. Required for replicative DNA synthesis. This DNA polymerase also exhibits 3' to 5' exonuclease activity. In Streptococcus thermophilus (strain ATCC BAA-250 / LMG 18311), this protein is DNA polymerase III PolC-type.